A 151-amino-acid chain; its full sequence is Large ribosomal subunit protein bL9 (151 aa).

The protein belongs to the bacterial ribosomal protein bL9 family.

Binds to the 23S rRNA. In Francisella tularensis subsp. novicida (strain U112), this protein is Large ribosomal subunit protein bL9.